The sequence spans 653 residues: uncharacterized protein (653 aa).

The next 2 helical transmembrane spans lie at 39-59 and 207-227; these read AMTT…LKLI and AVFV…AFTI. Residues 225-277 form the HAMP domain; the sequence is FTITKPIRELLTGVKNIASGDFHQRISLPFGGELGALIFNFNEMAERLEKYEQ. A PAS domain is found at 286-356; it reads EKAKLETLVS…PALNDIVRKN (71 aa). Positions 421-651 constitute a Histidine kinase domain; it reads NVSHELRTPL…CFFFDLIIAK (231 aa). At histidine 424 the chain carries Phosphohistidine; by autocatalysis.

Its subcellular location is the plastid. The protein localises to the chloroplast membrane. The enzyme catalyses ATP + protein L-histidine = ADP + protein N-phospho-L-histidine.. This is an uncharacterized protein from Pyropia yezoensis (Susabi-nori).